A 607-amino-acid chain; its full sequence is Pyruvate decarboxylase 1 (607 aa).

Substrate contacts are provided by Asp-69 and His-156. The thiamine pyrophosphate binding stretch occupies residues 434–516; that stretch reads DSWFNCQKLK…FLINNGGYTI (83 aa). Positions 484, 511, and 513 each coordinate Mg(2+). Residue Glu-517 participates in substrate binding.

Belongs to the TPP enzyme family. Homotetramer. It depends on a metal cation as a cofactor. Thiamine diphosphate is required as a cofactor. In terms of tissue distribution, highly expressed in seeds, and at lower levels in roots and siliques.

The catalysed reaction is a 2-oxocarboxylate + H(+) = an aldehyde + CO2. May play a role in ethanolic fermentation during anoxia. The sequence is that of Pyruvate decarboxylase 1 (PDC1) from Arabidopsis thaliana (Mouse-ear cress).